We begin with the raw amino-acid sequence, 286 residues long: Polyamine aminopropyltransferase (286 aa).

The region spanning 5 to 238 is the PABS domain; that stretch reads TMWHETLHDQ…GIMTFAWATD (234 aa). Residue glutamine 33 participates in S-methyl-5'-thioadenosine binding. The spermidine site is built by histidine 64 and aspartate 88. S-methyl-5'-thioadenosine-binding positions include glutamate 108 and 140 to 141; that span reads DG. The active-site Proton acceptor is the aspartate 158. Spermidine is bound at residue 158–161; that stretch reads DCTD. Proline 165 contacts S-methyl-5'-thioadenosine.

It belongs to the spermidine/spermine synthase family. As to quaternary structure, homodimer or homotetramer.

Its subcellular location is the cytoplasm. It catalyses the reaction S-adenosyl 3-(methylsulfanyl)propylamine + putrescine = S-methyl-5'-thioadenosine + spermidine + H(+). The protein operates within amine and polyamine biosynthesis; spermidine biosynthesis; spermidine from putrescine: step 1/1. Functionally, catalyzes the irreversible transfer of a propylamine group from the amino donor S-adenosylmethioninamine (decarboxy-AdoMet) to putrescine (1,4-diaminobutane) to yield spermidine. This chain is Polyamine aminopropyltransferase, found in Salmonella enteritidis PT4 (strain P125109).